Consider the following 983-residue polypeptide: Bifunctional glutamine synthetase adenylyltransferase/adenylyl-removing enzyme (983 aa).

Residues 1-490 form an adenylyl removase region; it reads MDRKSSVTID…AHGQVFYSPV (490 aa). The interval 496 to 983 is adenylyl transferase; it reads RIPTQDLRMS…RVVDAVFWNQ (488 aa).

The protein belongs to the GlnE family. It depends on Mg(2+) as a cofactor.

It catalyses the reaction [glutamine synthetase]-O(4)-(5'-adenylyl)-L-tyrosine + phosphate = [glutamine synthetase]-L-tyrosine + ADP. The catalysed reaction is [glutamine synthetase]-L-tyrosine + ATP = [glutamine synthetase]-O(4)-(5'-adenylyl)-L-tyrosine + diphosphate. Its function is as follows. Involved in the regulation of glutamine synthetase GlnA, a key enzyme in the process to assimilate ammonia. When cellular nitrogen levels are high, the C-terminal adenylyl transferase (AT) inactivates GlnA by covalent transfer of an adenylyl group from ATP to specific tyrosine residue of GlnA, thus reducing its activity. Conversely, when nitrogen levels are low, the N-terminal adenylyl removase (AR) activates GlnA by removing the adenylyl group by phosphorolysis, increasing its activity. The regulatory region of GlnE binds the signal transduction protein PII (GlnB) which indicates the nitrogen status of the cell. The polypeptide is Bifunctional glutamine synthetase adenylyltransferase/adenylyl-removing enzyme (Cutibacterium acnes (strain DSM 16379 / KPA171202) (Propionibacterium acnes)).